Consider the following 226-residue polypeptide: Eukaryotic translation initiation factor 3 subunit K (226 aa).

The PCI domain occupies 44 to 202; that stretch reads YSLEVNLCLL…IVLPQNEFNH (159 aa).

It belongs to the eIF-3 subunit K family. In terms of assembly, component of the eukaryotic translation initiation factor 3 (eIF-3) complex.

It is found in the cytoplasm. Functionally, component of the eukaryotic translation initiation factor 3 (eIF-3) complex, which is involved in protein synthesis of a specialized repertoire of mRNAs and, together with other initiation factors, stimulates binding of mRNA and methionyl-tRNAi to the 40S ribosome. The eIF-3 complex specifically targets and initiates translation of a subset of mRNAs involved in cell proliferation. This Arabidopsis thaliana (Mouse-ear cress) protein is Eukaryotic translation initiation factor 3 subunit K (TIF3K1).